The following is a 537-amino-acid chain: Chaperonin GroEL (537 aa).

ATP contacts are provided by residues 29 to 32 (TLGP), 86 to 90 (DGTTT), glycine 413, 477 to 479 (NAA), and aspartate 493.

The protein belongs to the chaperonin (HSP60) family. As to quaternary structure, forms a cylinder of 14 subunits composed of two heptameric rings stacked back-to-back. Interacts with the co-chaperonin GroES.

It is found in the cytoplasm. It carries out the reaction ATP + H2O + a folded polypeptide = ADP + phosphate + an unfolded polypeptide.. Functionally, together with its co-chaperonin GroES, plays an essential role in assisting protein folding. The GroEL-GroES system forms a nano-cage that allows encapsulation of the non-native substrate proteins and provides a physical environment optimized to promote and accelerate protein folding. In Bifidobacterium animalis subsp. lactis (strain AD011), this protein is Chaperonin GroEL.